The primary structure comprises 336 residues: Probable allantoicase 2 (336 aa).

It belongs to the allantoicase family.

It carries out the reaction allantoate + H2O = (S)-ureidoglycolate + urea. Its pathway is nitrogen metabolism; (S)-allantoin degradation; (S)-ureidoglycolate from allantoate (aminidohydrolase route): step 1/1. The protein is Probable allantoicase 2 of Burkholderia mallei (strain ATCC 23344).